A 212-amino-acid polypeptide reads, in one-letter code: Ribonuclease HII (212 aa).

The 205-residue stretch at 2-206 folds into the RNase H type-2 domain; sequence TPLVGVDEAG…CERIRAEAEQ (205 aa). Residues aspartate 8, glutamate 9, and aspartate 101 each contribute to the a divalent metal cation site.

This sequence belongs to the RNase HII family. Mn(2+) serves as cofactor. Mg(2+) is required as a cofactor.

The protein localises to the cytoplasm. The catalysed reaction is Endonucleolytic cleavage to 5'-phosphomonoester.. Endonuclease that specifically degrades the RNA of RNA-DNA hybrids. This is Ribonuclease HII from Natronomonas pharaonis (strain ATCC 35678 / DSM 2160 / CIP 103997 / JCM 8858 / NBRC 14720 / NCIMB 2260 / Gabara) (Halobacterium pharaonis).